The chain runs to 417 residues: MLKRDMTIAGYDPELWQAITDETRRQEEHIELIASENYTSPRVMEAQGSQLTNKYAEGYPSKRYYGGCEYVDVVETLAIERAKELFGATYANVQPHSGSQANSAVYMALLQPGDTVLGMNLAHGGHLTHGSPVNFSGKLYNIIPYGIDESGKIDYDDMERQAVEHKPKMMIGGFSAYSGIVDWARMREIADKVGAWLFVDMAHVAGLIAAGVYPNPVPHAHVVTSTTHKTLAGPRGGLILSAADDEELYKKLNSAVFPGGQGGPLMHVIAGKAVAFKEALEPEFKTYQAQVVKNAKAMAATFIERGYKIVSGGTDNHLMLVDLIGRELTGKEADAALGKANITVNKNSVPNDPRSPFVTSGVRIGTPAITRRGFKEAESIQLTNWICDVLDNHDNDAVLATVREQVLDICRRFPVYA.

(6S)-5,6,7,8-tetrahydrofolate-binding positions include Leu121 and 125 to 127 (GHL). The residue at position 229 (Lys229) is an N6-(pyridoxal phosphate)lysine. Residue 355-357 (SPF) coordinates (6S)-5,6,7,8-tetrahydrofolate.

This sequence belongs to the SHMT family. Homodimer. Pyridoxal 5'-phosphate serves as cofactor.

It is found in the cytoplasm. It carries out the reaction (6R)-5,10-methylene-5,6,7,8-tetrahydrofolate + glycine + H2O = (6S)-5,6,7,8-tetrahydrofolate + L-serine. The protein operates within one-carbon metabolism; tetrahydrofolate interconversion. It functions in the pathway amino-acid biosynthesis; glycine biosynthesis; glycine from L-serine: step 1/1. Its function is as follows. Catalyzes the reversible interconversion of serine and glycine with tetrahydrofolate (THF) serving as the one-carbon carrier. This reaction serves as the major source of one-carbon groups required for the biosynthesis of purines, thymidylate, methionine, and other important biomolecules. Also exhibits THF-independent aldolase activity toward beta-hydroxyamino acids, producing glycine and aldehydes, via a retro-aldol mechanism. This Aeromonas hydrophila subsp. hydrophila (strain ATCC 7966 / DSM 30187 / BCRC 13018 / CCUG 14551 / JCM 1027 / KCTC 2358 / NCIMB 9240 / NCTC 8049) protein is Serine hydroxymethyltransferase.